Reading from the N-terminus, the 396-residue chain is Zinc metalloproteinase nas-19 (396 aa).

The first 20 residues, 1–20, serve as a signal peptide directing secretion; it reads MVRLIHLIGAIILLFSYAYC. Positions 38–231 constitute a Peptidase M12A domain; that stretch reads RVKRQFERLG…YKINQYYGCW (194 aa). N-linked (GlcNAc...) asparagine glycosylation occurs at Asn79. Cystine bridges form between Cys82–Cys230, Cys105–Cys130, Cys232–Cys252, and Cys254–Cys263. A Zn(2+)-binding site is contributed by His138. The active site involves Glu139. Zn(2+)-binding residues include His142 and His148. In terms of domain architecture, EGF-like spans 225-264; the sequence is NQYYGCWCSKQLECKNGGYTSPSDCSRCNCPKGFFGNLCD. N-linked (GlcNAc...) asparagine glycosylation occurs at Asn310.

The cofactor is Zn(2+).

Its subcellular location is the secreted. Its function is as follows. Metalloprotease. The chain is Zinc metalloproteinase nas-19 (nas-19) from Caenorhabditis elegans.